The chain runs to 209 residues: Large ribosomal subunit protein uL3 (209 aa).

Positions 118–152 are disordered; it reads GFQGAIKRHGQSRGPMSHGSRYHRRPGSMGPVDPN.

This sequence belongs to the universal ribosomal protein uL3 family. Part of the 50S ribosomal subunit. Forms a cluster with proteins L14 and L19.

Functionally, one of the primary rRNA binding proteins, it binds directly near the 3'-end of the 23S rRNA, where it nucleates assembly of the 50S subunit. In Bacillus licheniformis (strain ATCC 14580 / DSM 13 / JCM 2505 / CCUG 7422 / NBRC 12200 / NCIMB 9375 / NCTC 10341 / NRRL NRS-1264 / Gibson 46), this protein is Large ribosomal subunit protein uL3.